Here is an 89-residue protein sequence, read N- to C-terminus: Large ribosomal subunit protein bL27 (89 aa).

Residues 1-21 form a disordered region; the sequence is MAHKKAGGSSRNGRDSKGKRL.

It belongs to the bacterial ribosomal protein bL27 family.

The sequence is that of Large ribosomal subunit protein bL27 from Bradyrhizobium sp. (strain ORS 278).